We begin with the raw amino-acid sequence, 295 residues long: Protoheme IX farnesyltransferase 2 (295 aa).

9 consecutive transmembrane segments (helical) span residues 9–29 (ITKP…FFLA), 36–56 (FALF…GCVF), 83–103 (LPLA…LLYV), 108–128 (LSAF…SLWL), 135–155 (GTLV…CAVS), 163–183 (VTLL…IAIF), 209–229 (IVLY…GGYA), 230–250 (GLGY…MAWG), and 264–284 (VFGF…VDSQ).

Belongs to the UbiA prenyltransferase family. Protoheme IX farnesyltransferase subfamily.

The protein localises to the cell inner membrane. It catalyses the reaction heme b + (2E,6E)-farnesyl diphosphate + H2O = Fe(II)-heme o + diphosphate. It participates in porphyrin-containing compound metabolism; heme O biosynthesis; heme O from protoheme: step 1/1. In terms of biological role, converts heme B (protoheme IX) to heme O by substitution of the vinyl group on carbon 2 of heme B porphyrin ring with a hydroxyethyl farnesyl side group. This chain is Protoheme IX farnesyltransferase 2, found in Pseudomonas putida (strain ATCC 47054 / DSM 6125 / CFBP 8728 / NCIMB 11950 / KT2440).